The chain runs to 498 residues: GTPase Der (498 aa).

EngA-type G domains follow at residues 3–166 and 212–385; these read PVVA…FEEL and IKFA…RSAT. Residues 9 to 16, 56 to 60, 118 to 121, 218 to 225, 265 to 269, and 330 to 333 each bind GTP; these read GRPNVGKS, DTGGI, NKTD, DTAGV, and NKWD. Residues 386-470 enclose the KH-like domain; sequence KRISTSMLTR…PIHIEFQEGD (85 aa).

It belongs to the TRAFAC class TrmE-Era-EngA-EngB-Septin-like GTPase superfamily. EngA (Der) GTPase family. Associates with the 50S ribosomal subunit.

In terms of biological role, GTPase that plays an essential role in the late steps of ribosome biogenesis. This chain is GTPase Der, found in Tolumonas auensis (strain DSM 9187 / NBRC 110442 / TA 4).